A 549-amino-acid chain; its full sequence is Glucose-6-phosphate isomerase (549 aa).

The active-site Proton donor is the E355. Active-site residues include H386 and K514.

Belongs to the GPI family.

It localises to the cytoplasm. It catalyses the reaction alpha-D-glucose 6-phosphate = beta-D-fructose 6-phosphate. It participates in carbohydrate biosynthesis; gluconeogenesis. The protein operates within carbohydrate degradation; glycolysis; D-glyceraldehyde 3-phosphate and glycerone phosphate from D-glucose: step 2/4. Catalyzes the reversible isomerization of glucose-6-phosphate to fructose-6-phosphate. This is Glucose-6-phosphate isomerase from Klebsiella pneumoniae (strain 342).